We begin with the raw amino-acid sequence, 274 residues long: Large ribosomal subunit protein uL2 (274 aa).

Positions 223–256 (VAMNPVDHPHGGGEGRTSGGRHPVTPWGIPTKGY) are disordered.

This sequence belongs to the universal ribosomal protein uL2 family. In terms of assembly, part of the 50S ribosomal subunit. Forms a bridge to the 30S subunit in the 70S ribosome.

In terms of biological role, one of the primary rRNA binding proteins. Required for association of the 30S and 50S subunits to form the 70S ribosome, for tRNA binding and peptide bond formation. It has been suggested to have peptidyltransferase activity; this is somewhat controversial. Makes several contacts with the 16S rRNA in the 70S ribosome. The protein is Large ribosomal subunit protein uL2 of Trichlorobacter lovleyi (strain ATCC BAA-1151 / DSM 17278 / SZ) (Geobacter lovleyi).